The following is a 155-amino-acid chain: Endoribonuclease YbeY (155 aa).

Zn(2+) contacts are provided by His-114, His-118, and His-124.

It belongs to the endoribonuclease YbeY family. The cofactor is Zn(2+).

It is found in the cytoplasm. Single strand-specific metallo-endoribonuclease involved in late-stage 70S ribosome quality control and in maturation of the 3' terminus of the 16S rRNA. In Shigella flexneri serotype 5b (strain 8401), this protein is Endoribonuclease YbeY.